Reading from the N-terminus, the 106-residue chain is Nucleoid-associated protein Smal_0858 (106 aa).

The tract at residues 81–106 (IDAESKSKMGSATAGMQLPPGMKLPF) is disordered.

Belongs to the YbaB/EbfC family. In terms of assembly, homodimer.

Its subcellular location is the cytoplasm. It is found in the nucleoid. Binds to DNA and alters its conformation. May be involved in regulation of gene expression, nucleoid organization and DNA protection. The sequence is that of Nucleoid-associated protein Smal_0858 from Stenotrophomonas maltophilia (strain R551-3).